A 507-amino-acid chain; its full sequence is Maturase K (507 aa).

This sequence belongs to the intron maturase 2 family. MatK subfamily.

The protein localises to the plastid. The protein resides in the chloroplast. Its function is as follows. Usually encoded in the trnK tRNA gene intron. Probably assists in splicing its own and other chloroplast group II introns. The sequence is that of Maturase K from Euryale ferox (Gorgon plant).